The following is a 690-amino-acid chain: Glutamate--cysteine ligase (690 aa).

Composition is skewed to low complexity over residues 574-585 and 598-619; these read QQQNGHVNNNNN and NGSTTTTNGTNSGSGITETNGT. The interval 574–620 is disordered; sequence QQQNGHVNNNNNNDKKTKNDPIIVNGSTTTTNGTNSGSGITETNGTM.

It belongs to the glutamate--cysteine ligase type 3 family.

The catalysed reaction is L-cysteine + L-glutamate + ATP = gamma-L-glutamyl-L-cysteine + ADP + phosphate + H(+). Its pathway is sulfur metabolism; glutathione biosynthesis; glutathione from L-cysteine and L-glutamate: step 1/2. The protein is Glutamate--cysteine ligase (GCS1) of Candida albicans (Yeast).